Consider the following 264-residue polypeptide: Thiazole synthase (264 aa).

The active-site Schiff-base intermediate with DXP is the Lys106. 1-deoxy-D-xylulose 5-phosphate contacts are provided by residues Gly167, 193–194, and 215–216; these read AG and NS.

This sequence belongs to the ThiG family. In terms of assembly, homotetramer. Forms heterodimers with either ThiH or ThiS.

The protein localises to the cytoplasm. It carries out the reaction [ThiS sulfur-carrier protein]-C-terminal-Gly-aminoethanethioate + 2-iminoacetate + 1-deoxy-D-xylulose 5-phosphate = [ThiS sulfur-carrier protein]-C-terminal Gly-Gly + 2-[(2R,5Z)-2-carboxy-4-methylthiazol-5(2H)-ylidene]ethyl phosphate + 2 H2O + H(+). The protein operates within cofactor biosynthesis; thiamine diphosphate biosynthesis. In terms of biological role, catalyzes the rearrangement of 1-deoxy-D-xylulose 5-phosphate (DXP) to produce the thiazole phosphate moiety of thiamine. Sulfur is provided by the thiocarboxylate moiety of the carrier protein ThiS. In vitro, sulfur can be provided by H(2)S. The polypeptide is Thiazole synthase (Prochlorococcus marinus (strain MIT 9301)).